Reading from the N-terminus, the 337-residue chain is Inositol 2-dehydrogenase (337 aa).

This sequence belongs to the Gfo/Idh/MocA family. As to quaternary structure, homotetramer.

It carries out the reaction myo-inositol + NAD(+) = scyllo-inosose + NADH + H(+). Its function is as follows. Involved in the oxidation of myo-inositol (MI) to 2-keto-myo-inositol (2KMI or 2-inosose). In Burkholderia cenocepacia (strain HI2424), this protein is Inositol 2-dehydrogenase.